We begin with the raw amino-acid sequence, 96 residues long: Large ribosomal subunit protein eL14 (96 aa).

The protein belongs to the eukaryotic ribosomal protein eL14 family.

This Sulfolobus acidocaldarius (strain ATCC 33909 / DSM 639 / JCM 8929 / NBRC 15157 / NCIMB 11770) protein is Large ribosomal subunit protein eL14.